The following is a 134-amino-acid chain: Ribosome-binding factor A (134 aa).

This sequence belongs to the RbfA family. As to quaternary structure, monomer. Binds 30S ribosomal subunits, but not 50S ribosomal subunits or 70S ribosomes.

The protein localises to the cytoplasm. Its function is as follows. One of several proteins that assist in the late maturation steps of the functional core of the 30S ribosomal subunit. Associates with free 30S ribosomal subunits (but not with 30S subunits that are part of 70S ribosomes or polysomes). Required for efficient processing of 16S rRNA. May interact with the 5'-terminal helix region of 16S rRNA. The sequence is that of Ribosome-binding factor A from Sinorhizobium medicae (strain WSM419) (Ensifer medicae).